The primary structure comprises 144 residues: 3-dehydroquinate dehydratase (144 aa).

The Proton acceptor role is filled by Y22. Substrate is bound by residues N73, H79, and D86. H99 (proton donor) is an active-site residue. Substrate contacts are provided by residues 100 to 101 (LS) and R110.

Belongs to the type-II 3-dehydroquinase family. As to quaternary structure, homododecamer.

The catalysed reaction is 3-dehydroquinate = 3-dehydroshikimate + H2O. The protein operates within metabolic intermediate biosynthesis; chorismate biosynthesis; chorismate from D-erythrose 4-phosphate and phosphoenolpyruvate: step 3/7. Catalyzes a trans-dehydration via an enolate intermediate. This chain is 3-dehydroquinate dehydratase, found in Geotalea daltonii (strain DSM 22248 / JCM 15807 / FRC-32) (Geobacter daltonii).